A 375-amino-acid polypeptide reads, in one-letter code: ATP-sensitive inward rectifier potassium channel 15 (375 aa).

Over 1-60 the chain is Cytoplasmic; it reads MDAIHIGMSSTPLVKHTAGAGLKANRPRVMSKSGHSNVRIDKVDGIYLLYLQDLWTTVID. A helical membrane pass occupies residues 61–87; the sequence is MKWRYKLTLFAATFVMTWFLFGVIYYA. Topologically, residues 88–113 are extracellular; sequence IAFIHGDLEPGEPISNHTPCIMKVDS. Residues 114 to 130 constitute an intramembrane region (helical; Pore-forming); it reads LTGAFLFSLESQTTIGY. Residues 127-132 carry the Selectivity filter motif; that stretch reads TIGYGV. Residues 131-139 lie on the Extracellular side of the membrane; sequence GVRSITEEC. The helical transmembrane segment at 140-165 threads the bilayer; it reads PHAIFLLVAQLVITTLIEIFITGTFL. Topologically, residues 166-375 are cytoplasmic; that stretch reads AKIARPKKRA…RTLLLQQSNV (210 aa).

It belongs to the inward rectifier-type potassium channel (TC 1.A.2.1) family. KCNJ15 subfamily. As to quaternary structure, can form heteromultimeric channels with Kir5.1/KCNJ16. Interacts with PATJ.

Its subcellular location is the membrane. It localises to the cell membrane. The catalysed reaction is K(+)(in) = K(+)(out). With respect to regulation, channel activity is regulated by variations of cytosolic pH; reversibly inhibited by acidic pH values. Inhibited by Ba(2+) and Cs(+) in a voltage-dependent manner. Its function is as follows. Inward rectifier potassium channels are characterized by a greater tendency to allow potassium to flow into the cell rather than out of it. Their voltage dependence is regulated by the concentration of extracellular potassium; as external potassium is raised, the voltage range of the channel opening shifts to more positive voltages. The inward rectification is mainly due to the blockage of outward current by internal magnesium. This chain is ATP-sensitive inward rectifier potassium channel 15 (KCNJ15), found in Homo sapiens (Human).